Reading from the N-terminus, the 1491-residue chain is CLIP-associating protein (1491 aa).

4 HEAT repeats span residues 44–82 (CTDMGFLIDGLMPWLTGSHFKIAQKSLEAFSELIKRLGS), 85–123 (NAYTATVLPHVIDRLGDSRDTVREKAQLLLRDLMEHRVL), 163–201 (QLSVRVYIPPVCALLGDPTVNVREAAIQTLVEIYKHVGD), and 402–440 (DAFCWSILEHLINLIQNSAKVIASASTIALKYIIKYTHA). Disordered regions lie at residues 537 to 586 (RERE…AVDT) and 600 to 739 (LYSR…NNPV). Residues 542 to 551 (GGGGGTGTGT) show a composition bias toward gly residues. Positions 569 to 580 (GTLQKPTPSMRS) are enriched in polar residues. Ser582, Ser626, and Ser634 each carry phosphoserine. Positions 632 to 646 (LNSNSGGTPATTPGS) are enriched in polar residues. Thr648 is modified (phosphothreonine). 2 stretches are compositionally biased toward polar residues: residues 657 to 671 (VSQSQPGSRSTSPST) and 699 to 712 (PRSTASSRETSPTR). Residues Ser806, Ser817, Ser820, Ser822, and Ser824 each carry the phosphoserine modification. HEAT repeat units lie at residues 874–912 (QQQLKCVLDMFRKMFMDTHTKVYSLFLDTVTELILVHAN) and 955–993 (QLQLKELFRIISDSTQTPTTKTRIAILRFLTDLANTYCK). 2 disordered regions span residues 1065–1127 (HMRR…SVEQ) and 1167–1205 (GHLQYHDQGQQDSCASLSSNSKTQSSANTTQSNTPESAT). Low complexity-rich tracts occupy residues 1070–1097 (SQSCNSGANSPSSSPLSSSSPKPLQSPS), 1111–1124 (LSISSTSPRSRQSS), and 1181–1200 (ASLSSNSKTQSSANTTQSNT). Residues Ser1120, Ser1123, and Ser1124 each carry the phosphoserine modification. HEAT repeat units lie at residues 1289 to 1327 (NKHFRSIMRMLLNILEAEHTDVVIAGLHVLSKIMRSNKM) and 1408 to 1446 (DAHLDIVFPNLARSADDTQSMVRKAAVFCIVKLYFVLGE).

The protein belongs to the CLASP family. In terms of assembly, interacts with CLIP-190 and microtubules. In terms of tissue distribution, expressed in testis and ovary.

The protein localises to the cytoplasm. Its subcellular location is the cytoskeleton. It is found in the nucleus. It localises to the microtubule organizing center. The protein resides in the centrosome. The protein localises to the spindle. Its subcellular location is the cell projection. It is found in the growth cone. It localises to the cleavage furrow. Its function is as follows. Microtubule plus-end tracking protein that promotes the stabilization of dynamic microtubules. Required for several aspects of mitotic spindle formation including the formation of the overlapping central spindle microtubules and kinetochore attachment. Required for the incorporation of tubulin subunits at the plus ends of kinetochore microtubules during poleward microtubule flux. Acts antagonistically to Klp10A and Klp67A to maintain metaphase spindle length. Also required for guidance of CNS axons downstream of Abl. May function to identify a subset of microtubules that probe the peripheral growth cone domain, where guidance signals exert their influence on cytoskeletal organization. Also required during oogenesis for the organization of the polarized microtubule network inside the 16-cell cyst that ensures oocyte differentiation. The polypeptide is CLIP-associating protein (chb) (Drosophila melanogaster (Fruit fly)).